The sequence spans 318 residues: Olfactory receptor 5G25 (318 aa).

The Extracellular segment spans residues 1-25 (MMHRNQTVVTEFFFTGLTSSFHLQI). N5 is a glycosylation site (N-linked (GlcNAc...) asparagine). The helical transmembrane segment at 26-46 (VLFLTFLCVYLATLLGNLGMI) threads the bilayer. At 47-54 (ILIHQDTR) the chain is on the cytoplasmic side. Residues 55–75 (LHIPMYFFLSHLSFVDACSSS) form a helical membrane-spanning segment. The Extracellular segment spans residues 76–99 (VISPKMLSDIFVDKKVISFLGCAI). Residues C97 and C189 are joined by a disulfide bond. Residues 100 to 120 (QFCLFSQFVVTECFLLASMAY) traverse the membrane as a helical segment. At 121-133 (DRYVAICKPLLYT) the chain is on the cytoplasmic side. Residues 134-154 (LIMSQRVCVQLVIGPYSIGLI) traverse the membrane as a helical segment. Over 155–196 (STVVHTTSAFILPYCGPNLINHFFCDLLPVLSLACADTQMNK) the chain is Extracellular. A helical membrane pass occupies residues 197–217 (HLLFIMAGILGVFSGIIILVS). Residues 218–237 (YVYIAITILKINSADGRRKA) lie on the Cytoplasmic side of the membrane. The helical transmembrane segment at 238–258 (FSTCSSHLTAVSILYGTLFFI) threads the bilayer. At 259-271 (YVRPSSSFSLDIN) the chain is on the extracellular side. Residues 272 to 292 (KVVSLFYTAVIPMLNPFIYSL) form a helical membrane-spanning segment. Residues 293–318 (RNKEVKDALIRTFEKKFCYSLQDKIL) are Cytoplasmic-facing.

The protein belongs to the G-protein coupled receptor 1 family.

Its subcellular location is the cell membrane. In terms of biological role, potential odorant receptor. This Mus musculus (Mouse) protein is Olfactory receptor 5G25.